The following is a 284-amino-acid chain: NH(3)-dependent NAD(+) synthetase (284 aa).

51–58 contributes to the ATP binding site; sequence GISGGIDS. Asp57 contributes to the Mg(2+) binding site. Arg148 serves as a coordination point for deamido-NAD(+). Thr168 provides a ligand contact to ATP. Residue Glu173 coordinates Mg(2+). Residues Lys181 and Asp188 each contribute to the deamido-NAD(+) site. ATP-binding residues include Lys197 and Thr219. Position 268–269 (268–269) interacts with deamido-NAD(+); the sequence is HK.

It belongs to the NAD synthetase family. Homodimer.

The enzyme catalyses deamido-NAD(+) + NH4(+) + ATP = AMP + diphosphate + NAD(+) + H(+). It functions in the pathway cofactor biosynthesis; NAD(+) biosynthesis; NAD(+) from deamido-NAD(+) (ammonia route): step 1/1. Functionally, catalyzes the ATP-dependent amidation of deamido-NAD to form NAD. Uses ammonia as a nitrogen source. This Burkholderia mallei (strain NCTC 10247) protein is NH(3)-dependent NAD(+) synthetase.